The chain runs to 513 residues: ATP synthase subunit alpha (513 aa).

171 to 178 (GDRQIGKT) lines the ATP pocket.

This sequence belongs to the ATPase alpha/beta chains family. F-type ATPases have 2 components, CF(1) - the catalytic core - and CF(0) - the membrane proton channel. CF(1) has five subunits: alpha(3), beta(3), gamma(1), delta(1), epsilon(1). CF(0) has three main subunits: a(1), b(2) and c(9-12). The alpha and beta chains form an alternating ring which encloses part of the gamma chain. CF(1) is attached to CF(0) by a central stalk formed by the gamma and epsilon chains, while a peripheral stalk is formed by the delta and b chains.

It localises to the cell membrane. It carries out the reaction ATP + H2O + 4 H(+)(in) = ADP + phosphate + 5 H(+)(out). In terms of biological role, produces ATP from ADP in the presence of a proton gradient across the membrane. The alpha chain is a regulatory subunit. The polypeptide is ATP synthase subunit alpha (Wolbachia pipientis subsp. Culex pipiens (strain wPip)).